Consider the following 744-residue polypeptide: Prestin (744 aa).

The Cytoplasmic portion of the chain corresponds to 1 to 75 (MDHAEENEIP…PITKWLPAYK (75 aa)). The helical transmembrane segment at 76–104 (FKEYVLGDLVSGISTGVLQLPQGLAFAML) threads the bilayer. Over 105-108 (AAVP) the chain is Extracellular. Residues 109–126 (PVFGLYSSFYPVIMYCFF) traverse the membrane as a helical segment. Topologically, residues 127–137 (GTSRHISIGPF) are cytoplasmic. Residues 138 to 149 (AVISLMIGGVAV) traverse the membrane as a helical segment. The Extracellular segment spans residues 150 to 168 (RLVPDDIVIPGGVNATNGT). The Involved in motor function motif lies at 158–168 (IPGGVNATNGT). Residues Asn-163 and Asn-166 are each glycosylated (N-linked (GlcNAc...) asparagine). Residues 169–196 (EARDALRVKVAMSVTLLSGIIQFCLGVC) form a helical membrane-spanning segment. At 197–206 (RFGFVAIYLT) the chain is on the cytoplasmic side. A helical membrane pass occupies residues 207–230 (EPLVRGFTTAAAVHVFTSMLKYLF). At 231 to 241 (GVKTKRYSGIF) the chain is on the extracellular side. An intramembrane region (helical) is located at residues 242-253 (SVVYSTVAVLQN). At 254-258 (VKNLN) the chain is on the extracellular side. The chain crosses the membrane as a helical span at residues 259–276 (VCSLGVGLMVFGLLLGGK). The Cytoplasmic segment spans residues 277–291 (EFNERFKEKLPAPIP). Residues 292–307 (LEFFAVVMGTGISAGF) traverse the membrane as a helical segment. The Extracellular portion of the chain corresponds to 308–332 (NLHESYSVDVVGTLPLGLLPPANPD). Residues 333–359 (TSLFHLVYVDAIAIAIVGFSVTISMAK) traverse the membrane as a helical segment. Topologically, residues 360–370 (TLANKHGYQVD) are cytoplasmic. The helical transmembrane segment at 371 to 388 (GNQELIALGICNSIGSLF) threads the bilayer. Over 389–396 (QTFSISCS) the chain is Extracellular. The chain crosses the membrane as a helical span at residues 397–406 (LSRSLVQEGT). Ser-398 provides a ligand contact to salicylate. The Cytoplasmic segment spans residues 407–410 (GGKT). The chain crosses the membrane as a helical span at residues 411–431 (QLAGCLASLMILLVILATGFL). Residues 432–436 (FESLP) lie on the Extracellular side of the membrane. Residues 437–464 (QAVLSAIVIVNLKGMFMQFSDLPFFWRT) form a helical membrane-spanning segment. Ser-465 is a topological domain (cytoplasmic). The chain crosses the membrane as a helical span at residues 466-481 (KIELTIWLTTFVSSLF). Topologically, residues 482-484 (LGL) are extracellular. The chain crosses the membrane as a helical span at residues 485–504 (DYGLITAVIIALLTVIYRTQ). The segment at 505–718 (SPSYTVLGQL…AVLGSQVREA (214 aa)) is extended region for STAS domain. Topologically, residues 505–744 (SPSYTVLGQL…PNATPTTPEA (240 aa)) are cytoplasmic. In terms of domain architecture, STAS spans 525 to 713 (AYEEVKEIPG…HSIHDAVLGS (189 aa)). Residues 720-744 (AEQETTVLPPQEDMEPNATPTTPEA) form a disordered region.

Belongs to the SLC26A/SulP transporter (TC 2.A.53) family. As to quaternary structure, homodimer. Interacts (via STAS domain) with CALM; this interaction is calcium-dependent and the STAS domain interacts with only one lobe of CALM which is an elongated conformation. Interacts with MYH1. Specifically expressed in outer hair cells of cochleae (at protein level). Not detected in other cells of the organ of Corti.

The protein localises to the lateral cell membrane. It carries out the reaction 2 hydrogencarbonate(in) + chloride(out) = 2 hydrogencarbonate(out) + chloride(in). With respect to regulation, salicylate, an inhibitor of outer hair cell motility, acts as a competitive antagonist at the prestin anion-binding site. Voltage-sensitive motor protein that drives outer hair cell (OHC) electromotility (eM) and participates in sound amplification in the hearing organ. Converts changes in the transmembrane electric potential into mechanical displacements resulting in the coupling of its expansion to movement of a charged voltage sensor across the lipid membrane. The nature of the voltage sensor is not completely clear, and two models compete. In the first model, acts as an incomplete transporter where intracellular chloride anion acts as extrinsic voltage sensor that drives conformational change in the protein which is sufficient to produce a length change in the plane of the membrane and hence in the length of the OHC. The second model in which multiple charged amino acid residues are distributed at the intracellular and extracellular membrane interfaces that form an intrinsic voltage sensor, whose movement produces the non-linear capacitance (NLC). However, the effective voltage sensor may be the result of a hybrid voltage sensor assembled from intrinsic charge (charged residues) and extrinsic charge (bound anion). Notably, binding of anions to the anion-binding pocket partially neutralizes the intrinsic positive charge rather than to form an electrically negative sensor, therefore remaining charge may serve as voltage sensor that, after depolarization, moves from down (expanded state) to up (contracted) conformation, which is accompanied by an eccentric contraction of the intermembrane cross-sectional area of the protein as well as a major increase in the hydrophobic thickness of the protein having as consequences the plasma membrane thickening and the cell contraction after membrane depolarization. The anion-binding pocket transits from the inward-open (Down) state, where it is exposed toward the intracellular solvent in the absence of anion, to the occluded (Up) state upon anion binding. Salicylate competes for the anion-binding site and inhibits the voltage-sensor movement, and therefore inhibits the charge transfer and electromotility by displacing Cl(-) from the anion-binding site and by preventing the structural transitions to the contracted state. In addition, can act as a weak Cl(-)/HCO3(-) antiporter across the cell membrane and so regulate the intracellular pH of the outer hair cells (OHCs), while firstly found as being unable to mediate electrogenic anion transport. Moreover, supports a role in cardiac mechanical amplification serving as an elastic element to enhance the actomyosin- based sarcomere contraction system. The chain is Prestin from Rattus norvegicus (Rat).